Reading from the N-terminus, the 370-residue chain is Actin-related protein 2/3 complex subunit 1A-A (370 aa).

WD repeat units follow at residues 6-45 (FLLEPISCHAWNKDLTQIAISPNNHEVHIYKKSGDQWVKG), 50-89 (EHNGHITGIDWAPKSDRIVTCGADRNAYVWSQKDGVWKPT), 140-179 (PIRSTVLSLDWHPNNVLLAAGSCDFKTRVFSAYIKEVDEK), 202-241 (SSGGWVHSVSFSASGNKLAWVSHDSTVSVADASKNMSVSQ), 244-284 (TEFL…TFVS), and 322-365 (LHQN…SYIQ).

It belongs to the WD repeat ARPC1 family. As to quaternary structure, component of the Arp2/3 complex.

The protein localises to the cytoplasm. Its subcellular location is the cytoskeleton. It localises to the nucleus. In terms of biological role, probably functions as a component of the Arp2/3 complex which is involved in regulation of actin polymerization and together with an activating nucleation-promoting factor (NPF) mediates the formation of branched actin networks. In addition to its role in the cytoplasmic cytoskeleton, the Arp2/3 complex also promotes actin polymerization in the nucleus, thereby regulating gene transcription and repair of damaged DNA. This Xenopus laevis (African clawed frog) protein is Actin-related protein 2/3 complex subunit 1A-A (arpc1a-a).